The following is a 743-amino-acid chain: 1,4-alpha-glucan branching enzyme GlgB 2 (743 aa).

Residues 1–23 (MSERQGGQEQRTEADGMTTEGIS) form a disordered region. Aspartate 422 (nucleophile) is an active-site residue. Glutamate 475 (proton donor) is an active-site residue.

It belongs to the glycosyl hydrolase 13 family. GlgB subfamily. As to quaternary structure, monomer.

It carries out the reaction Transfers a segment of a (1-&gt;4)-alpha-D-glucan chain to a primary hydroxy group in a similar glucan chain.. It participates in glycan biosynthesis; glycogen biosynthesis. In terms of biological role, catalyzes the formation of the alpha-1,6-glucosidic linkages in glycogen by scission of a 1,4-alpha-linked oligosaccharide from growing alpha-1,4-glucan chains and the subsequent attachment of the oligosaccharide to the alpha-1,6 position. The protein is 1,4-alpha-glucan branching enzyme GlgB 2 of Xanthomonas euvesicatoria pv. vesicatoria (strain 85-10) (Xanthomonas campestris pv. vesicatoria).